Consider the following 172-residue polypeptide: RNA pyrophosphohydrolase (172 aa).

The region spanning 6 to 149 (GYRLNVGIVI…KRDVYRRAMK (144 aa)) is the Nudix hydrolase domain. The Nudix box signature appears at 38–59 (GGIDDGESPEQAMFRELYEEVG).

Belongs to the Nudix hydrolase family. RppH subfamily. It depends on a divalent metal cation as a cofactor.

Functionally, accelerates the degradation of transcripts by removing pyrophosphate from the 5'-end of triphosphorylated RNA, leading to a more labile monophosphorylated state that can stimulate subsequent ribonuclease cleavage. The sequence is that of RNA pyrophosphohydrolase from Vibrio cholerae serotype O1 (strain ATCC 39315 / El Tor Inaba N16961).